The chain runs to 438 residues: Cyanidin-3-O-glucoside 2-O-glucuronosyltransferase (438 aa).

Residues S264, 315–316 (WV), 333–341 (HCGWSSTME), and 355–358 (QFDQ) contribute to the UDP-alpha-D-glucuronate site.

Belongs to the UDP-glycosyltransferase family. Monomer. As to expression, expressed in petals. Not detected in sepals, stems, leaves, tubular corollas and white petals.

The protein resides in the cytoplasm. The catalysed reaction is cyanidin 3-O-beta-D-glucoside + UDP-alpha-D-glucuronate = cyanidin 3-O-(2-O-beta-D-glucuronosyl)-beta-D-glucoside + UDP + H(+). With respect to regulation, inhibited by copper, mercury, UDP, UTP and partially by calcium, cadmium, iron and UMP. Not affected by cobalt, magnesium, manganese, zinc, nickel, tin, uridine, sadium malonate and glucose. In terms of biological role, involved in the production of glucuronosylated anthocyanins that are the origin of the red coloration of flowers. Can use cyanidin 3-O-6''-O-malonylglucoside, cyanidin 3-O-glucoside and delphinidin 3-O-glucosideas substrates, but not pelargonidin 3-O-glucoside, cyanidin 3-O-3'',6''-O-dimalonylglucoside, pelargonidin 3,5-O-diglucoside, pelargonidin 3-O-6''-O-malonylglucoside-5-O-glucoside, quercetin 3-O-glucoside, quercetin 3-O-6''-O-malonylglucoside, daidzin, genistin,7-O-6''-O-malonylglucosides of daidzein and genistein, cyanidin, quercetin, daidzein, genistein p-Nitrophenyl beta-D-glucopyranoside, beta-estradiol, 17alpha-estradiol, 1-naphthol, 2-naphthol, 4-methylumbelliferone, and p-nitrophenol. Highly specific for UDP-glucuronate (UDP-GlcUA). Arg-25 is decisive with respect to UDP-sugar specificity. The polypeptide is Cyanidin-3-O-glucoside 2-O-glucuronosyltransferase (UGAT) (Bellis perennis (English daisy)).